A 441-amino-acid polypeptide reads, in one-letter code: Proline--tRNA ligase (441 aa).

It belongs to the class-II aminoacyl-tRNA synthetase family. ProS type 2 subfamily. In terms of assembly, homodimer.

It localises to the cytoplasm. The enzyme catalyses tRNA(Pro) + L-proline + ATP = L-prolyl-tRNA(Pro) + AMP + diphosphate. Functionally, catalyzes the attachment of proline to tRNA(Pro) in a two-step reaction: proline is first activated by ATP to form Pro-AMP and then transferred to the acceptor end of tRNA(Pro). This is Proline--tRNA ligase from Methylorubrum extorquens (strain PA1) (Methylobacterium extorquens).